The chain runs to 79 residues: DNA gyrase inhibitor YacG (79 aa).

Zn(2+) contacts are provided by Cys7, Cys10, Cys26, and Cys30.

The protein belongs to the DNA gyrase inhibitor YacG family. In terms of assembly, interacts with GyrB. Zn(2+) serves as cofactor.

Functionally, inhibits all the catalytic activities of DNA gyrase by preventing its interaction with DNA. Acts by binding directly to the C-terminal domain of GyrB, which probably disrupts DNA binding by the gyrase. The chain is DNA gyrase inhibitor YacG from Shewanella halifaxensis (strain HAW-EB4).